Here is a 103-residue protein sequence, read N- to C-terminus: Pro-corazonin (103 aa).

The signal sequence occupies residues 1–19 (MSANVTLLLIFVTLASVTA). Gln-20 bears the Pyrrolidone carboxylic acid mark. An Asparagine amide modification is found at Asn-30. Positions 34–103 (DQGHLRPELK…NLNAMMDAFY (70 aa)) are excised as a propeptide.

In terms of tissue distribution, expressed in corpora cardiaca (CC), corpora allata (CA), antennal lobe (AL) and gnathal ganglion (GNG) (at protein level). Expression in CC and CA detected in all animals, expression in AL and in GNG in some animals.

Its subcellular location is the secreted. Its function is as follows. Cardioactive peptide. Corazonin is probably involved in the physiological regulation of the heart beat. This Agrotis ipsilon (Black cutworm moth) protein is Pro-corazonin.